The primary structure comprises 224 residues: CASP-like protein 3A1 (224 aa).

The Cytoplasmic segment spans residues 1–59 (MMMNGQKLAPAAEVAVQLPESKVAADNISGTMSGPLVGASGGGTTAAMRPFGRKAEVMH). The chain crosses the membrane as a helical span at residues 60 to 80 (VLLRLLCIITSVAALSFMFTA). Topologically, residues 81-106 (QQSSTISIYGFMLPVQSKWSFSHSFE) are extracellular. Residues 107-127 (YLVGVSAAVAAHSLLQLLISM) form a helical membrane-spanning segment. Residues 128–142 (SRLLRKSPVIPSRSH) are Cytoplasmic-facing. Residues 143-163 (AWLIFAGDQVFAYAMISAGAA) traverse the membrane as a helical segment. The Extracellular segment spans residues 164-192 (ASGVTNLNRTGIQHTALPNFCKPLQSFCD). Asparagine 171 carries N-linked (GlcNAc...) asparagine glycosylation. Residues 193–213 (HVAVSIFFTFTSCFLLAASAV) traverse the membrane as a helical segment. Residues 214–224 (QEVIWLSRSKY) lie on the Cytoplasmic side of the membrane.

It belongs to the Casparian strip membrane proteins (CASP) family. As to quaternary structure, homodimer and heterodimers.

It is found in the cell membrane. This is CASP-like protein 3A1 from Populus trichocarpa (Western balsam poplar).